The chain runs to 425 residues: Enolase (425 aa).

The segment at 31–54 (TGSAIVPSGASTGEKEAVELRDSD) is disordered. The segment covering 43-54 (GEKEAVELRDSD) has biased composition (basic and acidic residues). Residue Gln-162 participates in (2R)-2-phosphoglycerate binding. The Proton donor role is filled by Glu-204. Residues Asp-241, Glu-285, and Asp-312 each contribute to the Mg(2+) site. The (2R)-2-phosphoglycerate site is built by Lys-337, Arg-366, Ser-367, and Lys-388. The active-site Proton acceptor is the Lys-337.

Belongs to the enolase family. Requires Mg(2+) as cofactor.

The protein resides in the cytoplasm. The protein localises to the secreted. Its subcellular location is the cell surface. It carries out the reaction (2R)-2-phosphoglycerate = phosphoenolpyruvate + H2O. It functions in the pathway carbohydrate degradation; glycolysis; pyruvate from D-glyceraldehyde 3-phosphate: step 4/5. Functionally, catalyzes the reversible conversion of 2-phosphoglycerate (2-PG) into phosphoenolpyruvate (PEP). It is essential for the degradation of carbohydrates via glycolysis. The protein is Enolase of Gloeobacter violaceus (strain ATCC 29082 / PCC 7421).